We begin with the raw amino-acid sequence, 385 residues long: 8-amino-7-oxononanoate synthase (385 aa).

Substrate is bound at residue arginine 21. 108 to 109 contacts pyridoxal 5'-phosphate; it reads GF. Histidine 133 provides a ligand contact to substrate. The pyridoxal 5'-phosphate site is built by serine 179, histidine 207, and threonine 233. The residue at position 236 (lysine 236) is an N6-(pyridoxal phosphate)lysine. Threonine 352 serves as a coordination point for substrate.

Belongs to the class-II pyridoxal-phosphate-dependent aminotransferase family. BioF subfamily. In terms of assembly, homodimer. Pyridoxal 5'-phosphate is required as a cofactor.

It carries out the reaction 6-carboxyhexanoyl-[ACP] + L-alanine + H(+) = (8S)-8-amino-7-oxononanoate + holo-[ACP] + CO2. It functions in the pathway cofactor biosynthesis; biotin biosynthesis. In terms of biological role, catalyzes the decarboxylative condensation of pimeloyl-[acyl-carrier protein] and L-alanine to produce 8-amino-7-oxononanoate (AON), [acyl-carrier protein], and carbon dioxide. The sequence is that of 8-amino-7-oxononanoate synthase from Salmonella dublin (strain CT_02021853).